Here is a 351-residue protein sequence, read N- to C-terminus: Biotin synthase (351 aa).

A Radical SAM core domain is found at 49–265 (NRVRIHILDN…LSVFRLVNPD (217 aa)). Positions 64, 68, and 71 each coordinate [4Fe-4S] cluster. Residues C108, C140, C200, and R269 each contribute to the [2Fe-2S] cluster site.

Belongs to the radical SAM superfamily. Biotin synthase family. As to quaternary structure, homodimer. Requires [4Fe-4S] cluster as cofactor. [2Fe-2S] cluster serves as cofactor.

The catalysed reaction is (4R,5S)-dethiobiotin + (sulfur carrier)-SH + 2 reduced [2Fe-2S]-[ferredoxin] + 2 S-adenosyl-L-methionine = (sulfur carrier)-H + biotin + 2 5'-deoxyadenosine + 2 L-methionine + 2 oxidized [2Fe-2S]-[ferredoxin]. Its pathway is cofactor biosynthesis; biotin biosynthesis; biotin from 7,8-diaminononanoate: step 2/2. Functionally, catalyzes the conversion of dethiobiotin (DTB) to biotin by the insertion of a sulfur atom into dethiobiotin via a radical-based mechanism. The polypeptide is Biotin synthase (Leptospira biflexa serovar Patoc (strain Patoc 1 / Ames)).